The primary structure comprises 476 residues: Aspartyl/glutamyl-tRNA(Asn/Gln) amidotransferase subunit B (476 aa).

Belongs to the GatB/GatE family. GatB subfamily. Heterotrimer of A, B and C subunits.

The catalysed reaction is L-glutamyl-tRNA(Gln) + L-glutamine + ATP + H2O = L-glutaminyl-tRNA(Gln) + L-glutamate + ADP + phosphate + H(+). It carries out the reaction L-aspartyl-tRNA(Asn) + L-glutamine + ATP + H2O = L-asparaginyl-tRNA(Asn) + L-glutamate + ADP + phosphate + 2 H(+). In terms of biological role, allows the formation of correctly charged Asn-tRNA(Asn) or Gln-tRNA(Gln) through the transamidation of misacylated Asp-tRNA(Asn) or Glu-tRNA(Gln) in organisms which lack either or both of asparaginyl-tRNA or glutaminyl-tRNA synthetases. The reaction takes place in the presence of glutamine and ATP through an activated phospho-Asp-tRNA(Asn) or phospho-Glu-tRNA(Gln). This Clostridium botulinum (strain ATCC 19397 / Type A) protein is Aspartyl/glutamyl-tRNA(Asn/Gln) amidotransferase subunit B.